We begin with the raw amino-acid sequence, 135 residues long: RxLR effector protein Avr10 (135 aa).

The N-terminal stretch at 1-19 is a signal peptide; sequence MRLSFIIFAISLLAGGSGA. Residues 34-43 show a composition bias toward polar residues; the sequence is GTNQGASTGK. Positions 34-64 are disordered; the sequence is GTNQGASTGKRSLRYDNNAERAGEEDDEERA. Positions 44–63 match the RxLR-dEER motif; sequence RSLRYDNNAERAGEEDDEER. The segment covering 46–55 has biased composition (basic and acidic residues); the sequence is LRYDNNAERA.

It belongs to the RxLR effector family.

The protein resides in the secreted. It localises to the host nucleus. Its subcellular location is the host cytoplasm. Its function is as follows. Secreted effector that acts as an elicitor of hypersensitive response (HR) specifically on plants carrying defense protein R10. Enhances P.infestans colonization of Nicotiana benthamiana leaves. The polypeptide is RxLR effector protein Avr10 (Phytophthora infestans (strain T30-4) (Potato late blight agent)).